The chain runs to 335 residues: Tetraacyldisaccharide 4'-kinase (335 aa).

ATP is bound at residue 58-65 (TVGGSGKT).

It belongs to the LpxK family.

It carries out the reaction a lipid A disaccharide + ATP = a lipid IVA + ADP + H(+). It participates in glycolipid biosynthesis; lipid IV(A) biosynthesis; lipid IV(A) from (3R)-3-hydroxytetradecanoyl-[acyl-carrier-protein] and UDP-N-acetyl-alpha-D-glucosamine: step 6/6. Transfers the gamma-phosphate of ATP to the 4'-position of a tetraacyldisaccharide 1-phosphate intermediate (termed DS-1-P) to form tetraacyldisaccharide 1,4'-bis-phosphate (lipid IVA). This is Tetraacyldisaccharide 4'-kinase from Shewanella sp. (strain MR-4).